The following is a 118-amino-acid chain: T cell receptor gamma variable 5 (118 aa).

A signal peptide spans 1–17; the sequence is MRWALLVLLAFLSPASQ. Positions 18–118 constitute an Ig-like domain; sequence KSSNLEGGTK…GVYYCATWDR (101 aa). Cys-41 and Cys-113 form a disulfide bridge. Asn-106 is a glycosylation site (N-linked (GlcNAc...) asparagine).

As to quaternary structure, gamma-delta TR is a heterodimer composed of a gamma and delta chain; disulfide-linked. The gamma-delta TR is associated with the transmembrane signaling CD3 coreceptor proteins following the stoichiometry: a single gamma-delta TR heterodimer associates with one CD3D-CD3E heterodimer, one CD3G-CD3E heterodimer and one CD247 homodimer forming a stable octameric structure. Upon activation, gamma-delta TR complex associates with FCER1G to initiate intracellular signaling.

The protein resides in the cell membrane. Functionally, v region of the variable domain of T cell receptor (TR) gamma chain that participates in the antigen recognition. Gamma-delta TRs recognize a variety of self and foreign non-peptide antigens frequently expressed at the epithelial boundaries between the host and external environment, including endogenous lipids presented by MH-like protein CD1D and phosphoantigens presented by butyrophilin-like molecule BTN3A1. Upon antigen recognition induces rapid, innate-like immune responses involved in pathogen clearance and tissue repair. Binding of gamma-delta TR complex to antigen triggers phosphorylation of immunoreceptor tyrosine-based activation motifs (ITAMs) in the CD3 chains by the LCK and FYN kinases, allowing the recruitment, phosphorylation, and activation of ZAP70 that facilitates phosphorylation of the scaffolding proteins LCP2 and LAT. This lead to the formation of a supramolecular signalosome that recruits the phospholipase PLCG1, resulting in calcium mobilization and ERK activation, ultimately leading to T cell expansion and differentiation into effector cells. Gamma-delta TRs are produced through somatic rearrangement of a limited repertoire of variable (V), diversity (D), and joining (J) genes. The potential diversity of gamma-delta TRs is conferred by the unique ability to rearrange (D) genes in tandem and to utilize all three reading frames. The combinatorial diversity is considerably increased by the sequence exonuclease trimming and random nucleotide (N) region additions which occur during the V-(D)-J rearrangements. This chain is T cell receptor gamma variable 5, found in Homo sapiens (Human).